A 96-amino-acid polypeptide reads, in one-letter code: Acylphosphatase (96 aa).

Positions 4 to 96 (RCEFLIFGKV…ESLNDFEILR (93 aa)) constitute an Acylphosphatase-like domain. Catalysis depends on residues Arg-19 and Asn-42.

Belongs to the acylphosphatase family.

The enzyme catalyses an acyl phosphate + H2O = a carboxylate + phosphate + H(+). This Helicobacter hepaticus (strain ATCC 51449 / 3B1) protein is Acylphosphatase (acyP).